We begin with the raw amino-acid sequence, 264 residues long: Ubiquinone biosynthesis protein COQ4 homolog, mitochondrial (264 aa).

Residues 1–26 constitute a mitochondrion transit peptide; it reads MMQRCWQISLPLARRRLIPSLTSKRT. His-169, Asp-170, His-173, and Glu-185 together coordinate Zn(2+).

It belongs to the COQ4 family. Component of a multi-subunit COQ enzyme complex. The cofactor is Zn(2+).

It localises to the mitochondrion inner membrane. It carries out the reaction a 4-hydroxy-3-methoxy-5-(all-trans-polyprenyl)benzoate + H(+) = a 2-methoxy-6-(all-trans-polyprenyl)phenol + CO2. The protein operates within cofactor biosynthesis; ubiquinone biosynthesis. Functionally, lyase that catalyzes the C1-decarboxylation of 4-hydroxy-3-methoxy-5-(all-trans-polyprenyl)benzoic acid into 2-methoxy-6-(all-trans-polyprenyl)phenol during ubiquinone biosynthesis. The sequence is that of Ubiquinone biosynthesis protein COQ4 homolog, mitochondrial from Drosophila grimshawi (Hawaiian fruit fly).